Here is a 411-residue protein sequence, read N- to C-terminus: Imidazolonepropionase (411 aa).

Fe(3+)-binding residues include His-75 and His-77. 2 residues coordinate Zn(2+): His-75 and His-77. 4-imidazolone-5-propanoate-binding residues include Arg-84, Tyr-147, and His-180. An N-formimidoyl-L-glutamate-binding site is contributed by Tyr-147. His-245 contributes to the Fe(3+) binding site. Zn(2+) is bound at residue His-245. Gln-248 lines the 4-imidazolone-5-propanoate pocket. Residue Asp-320 coordinates Fe(3+). Asp-320 provides a ligand contact to Zn(2+). The N-formimidoyl-L-glutamate site is built by Asn-322 and Gly-324. Position 325 (Thr-325) interacts with 4-imidazolone-5-propanoate.

The protein belongs to the metallo-dependent hydrolases superfamily. HutI family. The cofactor is Zn(2+). Requires Fe(3+) as cofactor.

It is found in the cytoplasm. The enzyme catalyses 4-imidazolone-5-propanoate + H2O = N-formimidoyl-L-glutamate. Its pathway is amino-acid degradation; L-histidine degradation into L-glutamate; N-formimidoyl-L-glutamate from L-histidine: step 3/3. Its function is as follows. Catalyzes the hydrolytic cleavage of the carbon-nitrogen bond in imidazolone-5-propanoate to yield N-formimidoyl-L-glutamate. It is the third step in the universal histidine degradation pathway. This is Imidazolonepropionase from Aeromonas salmonicida (strain A449).